A 353-amino-acid polypeptide reads, in one-letter code: (3aS,4S,5R,7aS)-5-hydroxy-7a-methyl-1-oxo-octahydro-1H-indene-4-carboxyl-CoA dehydrogenase (353 aa).

FMN contacts are provided by residues 22–24 (GMG), 171–173 (AGG), and 194–195 (GT).

Belongs to the nitronate monooxygenase family.

It catalyses the reaction (3aS,4S,5R,7aS)-5-hydroxy-7a-methyl-1-oxo-octahydro-1H-indene-4-carboxyl-CoA + NAD(+) = (5R,7aS)-5-hydroxy-7a-methyl-1-oxo-2,3,5,6,7,7a-hexahydro-1H-indene-carboxyl-CoA + NADH + H(+). It participates in steroid metabolism; cholesterol degradation. Its function is as follows. Involved in the final steps of cholesterol and steroid degradation. Probably catalyzes the introduction of a double bound into the C ring of 5OH-HIC-CoA, leading to the formation of (5R,7aS)-5-hydroxy-7a-methyl-1-oxo-3,5,6,7-tetrahydro-2H-indene-4-carboxyl-CoA. The polypeptide is (3aS,4S,5R,7aS)-5-hydroxy-7a-methyl-1-oxo-octahydro-1H-indene-4-carboxyl-CoA dehydrogenase (Rhodococcus jostii (strain RHA1)).